Reading from the N-terminus, the 286-residue chain is Putative type II secretion system L-type protein YghE (286 aa).

The chain crosses the membrane as a helical span at residues 136-156; sequence VMILPILLILVALAVERGVTL.

This sequence belongs to the GSP L family.

Its subcellular location is the cell inner membrane. Its function is as follows. Involved in a type II secretion system (T2SS, formerly general secretion pathway, GSP) for the export of folded proteins across the outer membrane. The chain is Putative type II secretion system L-type protein YghE from Escherichia coli (strain K12).